We begin with the raw amino-acid sequence, 181 residues long: Large ribosomal subunit protein uL6 (181 aa).

It belongs to the universal ribosomal protein uL6 family. In terms of assembly, part of the 50S ribosomal subunit.

Functionally, this protein binds to the 23S rRNA, and is important in its secondary structure. It is located near the subunit interface in the base of the L7/L12 stalk, and near the tRNA binding site of the peptidyltransferase center. The chain is Large ribosomal subunit protein uL6 from Saccharolobus solfataricus (strain ATCC 35092 / DSM 1617 / JCM 11322 / P2) (Sulfolobus solfataricus).